We begin with the raw amino-acid sequence, 152 residues long: Protein SprT-like (152 aa).

One can recognise a SprT-like domain in the interval 13-148 (NYVKKVSIED…FACGYCHGRL (136 aa)). H72 provides a ligand contact to Zn(2+). Residue E73 is part of the active site. Residue H76 participates in Zn(2+) binding.

It belongs to the SprT family. Requires Zn(2+) as cofactor.

It is found in the cytoplasm. The protein is Protein SprT-like of Streptococcus agalactiae serotype III (strain NEM316).